A 185-amino-acid polypeptide reads, in one-letter code: Transcription termination/antitermination protein NusG (185 aa).

Residues 134-164 form the KOW domain; that stretch reads VGKRVRIVDGAFSGFEAPITEINGDKLTLTV.

This sequence belongs to the NusG family.

Its function is as follows. Participates in transcription elongation, termination and antitermination. This chain is Transcription termination/antitermination protein NusG, found in Lactococcus lactis subsp. lactis (strain IL1403) (Streptococcus lactis).